Reading from the N-terminus, the 150-residue chain is Large ribosomal subunit protein bL9 (150 aa).

It belongs to the bacterial ribosomal protein bL9 family.

Functionally, binds to the 23S rRNA. In Vibrio atlanticus (strain LGP32) (Vibrio splendidus (strain Mel32)), this protein is Large ribosomal subunit protein bL9.